We begin with the raw amino-acid sequence, 241 residues long: Orotidine 5'-phosphate decarboxylase (241 aa).

Substrate contacts are provided by residues D15, K37, 64–73 (DLKYHDIPNT), T126, R187, Q196, G216, and R217. The Proton donor role is filled by K66.

This sequence belongs to the OMP decarboxylase family. Type 1 subfamily. Homodimer.

It carries out the reaction orotidine 5'-phosphate + H(+) = UMP + CO2. It functions in the pathway pyrimidine metabolism; UMP biosynthesis via de novo pathway; UMP from orotate: step 2/2. Functionally, catalyzes the decarboxylation of orotidine 5'-monophosphate (OMP) to uridine 5'-monophosphate (UMP). This chain is Orotidine 5'-phosphate decarboxylase, found in Geotalea uraniireducens (strain Rf4) (Geobacter uraniireducens).